We begin with the raw amino-acid sequence, 625 residues long: Exonuclease mut-7 homolog (625 aa).

At Ser-17 the chain carries Phosphoserine. One can recognise a 3'-5' exonuclease domain in the interval 410-602 (LIIVNKADEF…IYNTLIERVS (193 aa)).

This sequence belongs to the mut-7 family. As to quaternary structure, interacts with AGO1; the interaction is not RNA dependent. Requires Mg(2+) as cofactor.

Its function is as follows. Possesses 3'-5' exoribonuclease activity. Required for 3'-end trimming of AGO1-bound miRNAs, in particular multiple-isoform miRNAs, which represents a critical step in miRNA maturation. The sequence is that of Exonuclease mut-7 homolog (Nbr) from Drosophila melanogaster (Fruit fly).